The sequence spans 450 residues: Neuronal acetylcholine receptor subunit alpha-10 (450 aa).

Positions 1 to 24 (MGLRSHHLSLGLLLLFLLPAECLG) are cleaved as a signal peptide. Residues 25-237 (AEGRLALKLF…FTLLLRRRAA (213 aa)) are Extracellular-facing. Residues Asn-40 and Asn-56 are each glycosylated (N-linked (GlcNAc...) asparagine). 2 disulfides stabilise this stretch: Cys-154–Cys-168 and Cys-218–Cys-219. Transmembrane regions (helical) follow at residues 238 to 258 (AYVCNLLLPCVLISLLAPLAF), 268 to 288 (VSLGVTVLLALTVFQLLLAES), and 302 to 322 (YMATMTMVTFSTALTILIMNL). Over 323–428 (HYCGPSVRPV…WKRLARVMDR (106 aa)) the chain is Cytoplasmic. Residues 355 to 380 (EPCGQSRPPELSPSPQSPEGGAGPPA) form a disordered region. The helical transmembrane segment at 429 to 449 (FFLAIFFSMALVMSLLVLVQA) threads the bilayer.

The protein belongs to the ligand-gated ion channel (TC 1.A.9) family. Acetylcholine receptor (TC 1.A.9.1) subfamily. Alpha-10/CHRNA10 sub-subfamily. As to quaternary structure, forms homo- or heterooligomeric channels in conjunction with CHRNA10. The native outer hair cell receptor may be composed of CHRNA9:CHRNA10 heterooligomers. Found in the stoichiometric form (CHRNA9)2:(CHRNA10)3. As to expression, expressed in inner-ear tissue, tonsil, immortalized B-cells, cultured T-cells and peripheral blood lymphocytes.

Its subcellular location is the synaptic cell membrane. It is found in the cell membrane. The enzyme catalyses Ca(2+)(in) = Ca(2+)(out). It carries out the reaction K(+)(in) = K(+)(out). It catalyses the reaction Na(+)(in) = Na(+)(out). The catalysed reaction is Mg(2+)(in) = Mg(2+)(out). With respect to regulation, activated by a myriad of ligands such as acetylcholine. AChR activity is inhibited by the antagonists alpha-conotoxins RgIA and GeXXA, small disulfide-constrained peptides from cone snails. In terms of biological role, component of neuronal acetylcholine receptors (nAChRs) that function as pentameric, ligand-gated cation channels with high calcium permeability. nAChRs are excitatory neurotrasnmitter receptors formed by a collection of nAChR subunits. Each nAchR subunit confers differential attributes to channel properties, including activation, deactivation and desensitization kinetics, pH sensitivity, cation permeability, and binding to allosteric modulators. Forms heteropentamers with CHRNA9. Expressed in the inner ear, in sympathetic neurons and in other non-neuronal cells, such as skin keratinocytes and lymphocytes. nAChR formed by CHRNA9:CHRNA10 is involved in modulation of auditory stimuli. The channel is permeable to a range of divalent cations including calcium, the influx of which may activate a potassium current which hyperpolarizes the cell membrane. In the ear, mediates synaptic transmission between efferent olivocochlear fibers and hair cells of the cochlea, this may lead to a reduction in basilar membrane motion, altering the activity of auditory nerve fibers and reducing the range of dynamic hearing. This may protect against acoustic trauma. May also regulate keratinocyte adhesion. The polypeptide is Neuronal acetylcholine receptor subunit alpha-10 (Homo sapiens (Human)).